Reading from the N-terminus, the 300-residue chain is Diaminopimelate epimerase (300 aa).

Substrate contacts are provided by Asn15, Gln47, and Asn67. Cys76 serves as the catalytic Proton donor. Substrate is bound by residues 77–78, Asn163, Asn197, and 215–216; these read GN and ER. Cys224 acts as the Proton acceptor in catalysis. Position 225-226 (225-226) interacts with substrate; it reads GS. Positions 275–300 are disordered; it reads SGTFDPATGEWSRDAQNDKPTDRGAA. A compositionally biased stretch (basic and acidic residues) spans 285 to 300; it reads WSRDAQNDKPTDRGAA.

It belongs to the diaminopimelate epimerase family. As to quaternary structure, homodimer.

It is found in the cytoplasm. The catalysed reaction is (2S,6S)-2,6-diaminopimelate = meso-2,6-diaminopimelate. It functions in the pathway amino-acid biosynthesis; L-lysine biosynthesis via DAP pathway; DL-2,6-diaminopimelate from LL-2,6-diaminopimelate: step 1/1. In terms of biological role, catalyzes the stereoinversion of LL-2,6-diaminopimelate (L,L-DAP) to meso-diaminopimelate (meso-DAP), a precursor of L-lysine and an essential component of the bacterial peptidoglycan. This chain is Diaminopimelate epimerase, found in Brucella anthropi (strain ATCC 49188 / DSM 6882 / CCUG 24695 / JCM 21032 / LMG 3331 / NBRC 15819 / NCTC 12168 / Alc 37) (Ochrobactrum anthropi).